The sequence spans 520 residues: Putative cytochrome P450 CYP13A4 (520 aa).

Cys464 contributes to the heme binding site.

The protein belongs to the cytochrome P450 family. Heme serves as cofactor.

In terms of biological role, cytochromes P450 are a group of heme-thiolate monooxygenases. They oxidize a variety of structurally unrelated compounds, including steroids, fatty acids, and xenobiotics. The sequence is that of Putative cytochrome P450 CYP13A4 (cyp-13A4) from Caenorhabditis elegans.